A 230-amino-acid chain; its full sequence is uncharacterized protein (230 aa).

It belongs to the transferase hexapeptide repeat family.

This is an uncharacterized protein from Escherichia coli O6:K15:H31 (strain 536 / UPEC).